A 316-amino-acid chain; its full sequence is 4-hydroxy-3-methylbut-2-enyl diphosphate reductase (316 aa).

A [4Fe-4S] cluster-binding site is contributed by C12. 2 residues coordinate (2E)-4-hydroxy-3-methylbut-2-enyl diphosphate: H41 and H74. The dimethylallyl diphosphate site is built by H41 and H74. Isopentenyl diphosphate is bound by residues H41 and H74. C96 is a [4Fe-4S] cluster binding site. H124 provides a ligand contact to (2E)-4-hydroxy-3-methylbut-2-enyl diphosphate. H124 lines the dimethylallyl diphosphate pocket. Residue H124 participates in isopentenyl diphosphate binding. Catalysis depends on E126, which acts as the Proton donor. T167 contacts (2E)-4-hydroxy-3-methylbut-2-enyl diphosphate. C197 lines the [4Fe-4S] cluster pocket. (2E)-4-hydroxy-3-methylbut-2-enyl diphosphate-binding residues include S225, S226, N227, and S269. Residues S225, S226, N227, and S269 each coordinate dimethylallyl diphosphate. 4 residues coordinate isopentenyl diphosphate: S225, S226, N227, and S269.

The protein belongs to the IspH family. In terms of assembly, homodimer. The cofactor is [4Fe-4S] cluster.

It carries out the reaction isopentenyl diphosphate + 2 oxidized [2Fe-2S]-[ferredoxin] + H2O = (2E)-4-hydroxy-3-methylbut-2-enyl diphosphate + 2 reduced [2Fe-2S]-[ferredoxin] + 2 H(+). The enzyme catalyses dimethylallyl diphosphate + 2 oxidized [2Fe-2S]-[ferredoxin] + H2O = (2E)-4-hydroxy-3-methylbut-2-enyl diphosphate + 2 reduced [2Fe-2S]-[ferredoxin] + 2 H(+). The protein operates within isoprenoid biosynthesis; dimethylallyl diphosphate biosynthesis; dimethylallyl diphosphate from (2E)-4-hydroxy-3-methylbutenyl diphosphate: step 1/1. Its pathway is isoprenoid biosynthesis; isopentenyl diphosphate biosynthesis via DXP pathway; isopentenyl diphosphate from 1-deoxy-D-xylulose 5-phosphate: step 6/6. Its function is as follows. Catalyzes the conversion of 1-hydroxy-2-methyl-2-(E)-butenyl 4-diphosphate (HMBPP) into a mixture of isopentenyl diphosphate (IPP) and dimethylallyl diphosphate (DMAPP). Acts in the terminal step of the DOXP/MEP pathway for isoprenoid precursor biosynthesis. The chain is 4-hydroxy-3-methylbut-2-enyl diphosphate reductase from Shigella flexneri serotype 5b (strain 8401).